Reading from the N-terminus, the 731-residue chain is DNA topoisomerase 1 (731 aa).

Residues 17–130 (KHLVIVESPA…KRIVFNEITP (114 aa)) enclose the Toprim domain. Mg(2+) is bound by residues Glu-23 and Asp-96. A Topo IA-type catalytic domain is found at 144–569 (DTAKVNAQKA…DFYPAFSEKV (426 aa)). Residues 178–183 (SAGRVQ) are interaction with DNA. Tyr-312 (O-(5'-phospho-DNA)-tyrosine intermediate) is an active-site residue. 3 consecutive C4-type zinc fingers follow at residues 591–617 (CSQC…FPEC), 628–657 (CPRP…FPVC), and 670–696 (CPQC…NPEC).

The protein belongs to the type IA topoisomerase family. In terms of assembly, monomer. The cofactor is Mg(2+).

It catalyses the reaction ATP-independent breakage of single-stranded DNA, followed by passage and rejoining.. In terms of biological role, releases the supercoiling and torsional tension of DNA, which is introduced during the DNA replication and transcription, by transiently cleaving and rejoining one strand of the DNA duplex. Introduces a single-strand break via transesterification at a target site in duplex DNA. The scissile phosphodiester is attacked by the catalytic tyrosine of the enzyme, resulting in the formation of a DNA-(5'-phosphotyrosyl)-enzyme intermediate and the expulsion of a 3'-OH DNA strand. The free DNA strand then undergoes passage around the unbroken strand, thus removing DNA supercoils. Finally, in the religation step, the DNA 3'-OH attacks the covalent intermediate to expel the active-site tyrosine and restore the DNA phosphodiester backbone. The sequence is that of DNA topoisomerase 1 from Treponema pallidum (strain Nichols).